Consider the following 510-residue polypeptide: Cytochrome P450 monooxygenase btcC (510 aa).

A helical transmembrane segment spans residues 1–21 (MSFPGVIFVVSFFPLLMGIAV). A heme-binding site is contributed by Cys446.

It belongs to the cytochrome P450 family. It depends on heme as a cofactor.

The protein resides in the membrane. It functions in the pathway secondary metabolite biosynthesis; terpenoid biosynthesis. Its function is as follows. Cytochrome P450 monooxygenase; part of the gene cluster that mediates the biosynthesis of betaestacins. The bifunctional terpene synthase btcA converts isopentenyl diphosphate (IPP) and dimethylallyl diphosphate (DMAPP) into the sesterterpene betaestacin I. The C-terminal prenyltransferase (PT) domain of btcA catalyzes formation of GFPP, whereas the N-terminal terpene cyclase (TC) domain catalyzes the cyclization of GFPP into betaestacin I. The cytochrome P450 monooxygenase btcB is then responsible for the six-step oxidation of betaestacin I to yield betaestacin II. The roles of the cytochrome P450 monooxygenase btcC and the alpha-ketoglutarate-dependent dioxygenase btcD have not been identified yet. The sequence is that of Cytochrome P450 monooxygenase btcC from Neocamarosporium betae (Beet black rot fungus).